Consider the following 1074-residue polypeptide: Phospholipase D1 (1074 aa).

Residues 81 to 212 form the PX domain; that stretch reads IKAQVLEVER…TEFLDVSQLS (132 aa). Positions 219-328 constitute a PH domain; that stretch reads PKGLEGMIMK…WGGAIEEFIR (110 aa). Residues C240 and C241 are each lipidated (S-palmitoyl cysteine). Residues 459 to 486 form the PLD phosphodiesterase 1 domain; sequence YLWAHHEKLVIIDQSVAFVGGIDLAYGR. Residues 463-928 are catalytic; that stretch reads HHEKLVIIDQ…MLGKRDSEMA (466 aa). Phosphoserine occurs at positions 499, 561, and 629. A PLD phosphodiesterase 2 domain is found at 891 to 918; that stretch reads ELIYVHSKLLIADDNTVIIGSANINDRS.

It belongs to the phospholipase D family. In terms of assembly, interacts with PIP5K1B. In terms of tissue distribution, expressed in kidney, lung, and at a much lower levels, in brain, liver, heart, testis and spleen.

It is found in the cytoplasm. The protein localises to the perinuclear region. The protein resides in the endoplasmic reticulum membrane. Its subcellular location is the golgi apparatus membrane. It localises to the late endosome membrane. The enzyme catalyses a 1,2-diacyl-sn-glycero-3-phosphocholine + H2O = a 1,2-diacyl-sn-glycero-3-phosphate + choline + H(+). The catalysed reaction is ethanol + a 1,2-diacyl-sn-glycero-3-phosphocholine = 1,2-diacyl-sn-glycero-3-phosphoethanol + choline. It carries out the reaction 1,2-dihexadecanoyl-sn-glycero-3-phosphocholine + H2O = 1,2-dihexadecanoyl-sn-glycero-3-phosphate + choline + H(+). Its activity is regulated as follows. Stimulated by phosphatidylinositol 4,5-bisphosphate and phosphatidylinositol 3,4,5-trisphosphate, activated by the phosphokinase C-alpha, by the ADP-ribosylation factor-1 (ARF-1), and to a lesser extent by GTP-binding proteins: RHO A, RAC-1 and CDC42. Inhibited by oleate. Its function is as follows. Function as phospholipase selectivefor phosphatidylcholine. Implicated as a critical step in numerous cellular pathways, including signal transduction, membrane trafficking, and the regulation of mitosis. May be involved in the regulation of perinuclear intravesicular membrane traffic. The sequence is that of Phospholipase D1 from Mus musculus (Mouse).